The sequence spans 337 residues: Inositol 2-dehydrogenase (337 aa).

The protein belongs to the Gfo/Idh/MocA family. Homotetramer.

The enzyme catalyses myo-inositol + NAD(+) = scyllo-inosose + NADH + H(+). In terms of biological role, involved in the oxidation of myo-inositol (MI) to 2-keto-myo-inositol (2KMI or 2-inosose). This is Inositol 2-dehydrogenase from Corynebacterium glutamicum (strain R).